We begin with the raw amino-acid sequence, 130 residues long: D-ribose pyranase (130 aa).

The Proton donor role is filled by His-20. Substrate contacts are provided by residues Asp-28, His-97, and 119–121 (YAN).

It belongs to the RbsD / FucU family. RbsD subfamily. In terms of assembly, homodecamer.

Its subcellular location is the cytoplasm. It catalyses the reaction beta-D-ribopyranose = beta-D-ribofuranose. It participates in carbohydrate metabolism; D-ribose degradation; D-ribose 5-phosphate from beta-D-ribopyranose: step 1/2. Its function is as follows. Catalyzes the interconversion of beta-pyran and beta-furan forms of D-ribose. This Paracidovorax citrulli (strain AAC00-1) (Acidovorax citrulli) protein is D-ribose pyranase.